Here is a 313-residue protein sequence, read N- to C-terminus: Olfactory receptor 10G3 (313 aa).

Residues 1 to 25 lie on the Extracellular side of the membrane; the sequence is MERINSTLLTAFILTGIPYPLRLRT. Asparagine 5 carries N-linked (GlcNAc...) asparagine glycosylation. A helical membrane pass occupies residues 26–46; that stretch reads LFFVFFFLIYILTQLGNLLIL. The Cytoplasmic portion of the chain corresponds to 47–54; that stretch reads ITVWADPR. Residues 55–76 form a helical membrane-spanning segment; the sequence is LHARPMYIFLGVLSVIDMSISS. Topologically, residues 77-100 are extracellular; sequence IIVPRLMMNFTLGVKPIPFGGCVA. An N-linked (GlcNAc...) asparagine glycan is attached at asparagine 85. Residues cysteine 98 and cysteine 190 are joined by a disulfide bond. A helical membrane pass occupies residues 101–121; sequence QLYFYHFLGSTQCFLYTLMAY. The Cytoplasmic segment spans residues 122 to 140; sequence DRYLAICQPLRYPVLMTAK. The helical transmembrane segment at 141–161 threads the bilayer; sequence LSALLVAGAWMAGSIHGALQA. The Extracellular portion of the chain corresponds to 162 to 198; it reads ILTFRLPYCGPNQVDYFFCDIPAVLRLACADTTVNEL. Residues 199–218 traverse the membrane as a helical segment; it reads VTFVDIGVVVASCFSLILLS. Over 219–238 the chain is Cytoplasmic; that stretch reads YIQIIQAILRIHTADGRRRA. A helical membrane pass occupies residues 239 to 259; sequence FSTCGAHVTVVTVYYVPCAFI. Over 260 to 270 the chain is Extracellular; it reads YLRPETNSPLD. Residues 271–291 form a helical membrane-spanning segment; that stretch reads GAAALVPTAITPFLNPLIYTL. Residues 292–313 lie on the Cytoplasmic side of the membrane; it reads RNQEVKLALKRMLRSPRTPSEV.

It belongs to the G-protein coupled receptor 1 family.

It is found in the cell membrane. Its function is as follows. Odorant receptor. The sequence is that of Olfactory receptor 10G3 (OR10G3) from Homo sapiens (Human).